We begin with the raw amino-acid sequence, 898 residues long: Putative disease resistance protein At1g63350 (898 aa).

Positions 24-88 (VSYTHNLEKN…IESRVNDLLN (65 aa)) form a coiled coil. One can recognise an NB-ARC domain in the interval 137 to 440 (DQASTSEVEE…CEEIIDGSEG (304 aa)). Residue 179 to 186 (GMGGVGKT) coordinates ATP. LRR repeat units lie at residues 516 to 537 (VVRR…LDCM), 538 to 559 (ELTT…FFNS), 562 to 584 (KLAV…ISEL), 586 to 608 (SLQY…QELK), 609 to 631 (KLIH…SCLH), and 632 to 654 (NLKV…KELE).

The protein belongs to the disease resistance NB-LRR family.

Its function is as follows. Potential disease resistance protein. In Arabidopsis thaliana (Mouse-ear cress), this protein is Putative disease resistance protein At1g63350.